Here is a 292-residue protein sequence, read N- to C-terminus: Sulfofructosephosphate aldolase (292 aa).

The Schiff-base intermediate with substrate role is filled by lysine 193.

This sequence belongs to the aldolase LacD family. Homotetramer.

It catalyses the reaction 6-deoxy-6-sulfo-D-fructose 1-phosphate = (2S)-3-sulfolactaldehyde + dihydroxyacetone phosphate. Functionally, cleaves 6-deoxy-6-sulfo-D-fructose 1-phosphate (SFP) to form dihydroxyacetone phosphate (DHAP) and 3-sulfolactaldehyde (SLA). This chain is Sulfofructosephosphate aldolase (yihT), found in Escherichia coli (strain K12).